We begin with the raw amino-acid sequence, 557 residues long: Tryptophan 2-monooxygenase (557 aa).

S49, E69, R71, R77, and R98 together coordinate FMN. R98 is a substrate binding site.

Belongs to the tryptophan 2-monooxygenase family. In terms of assembly, monomer. Requires FMN as cofactor.

The catalysed reaction is L-tryptophan + O2 = indole-3-acetamide + CO2 + H2O. The protein operates within plant hormone metabolism; auxin biosynthesis. The protein is Tryptophan 2-monooxygenase (iaaM) of Pseudomonas savastanoi (Pseudomonas syringae pv. savastanoi).